The sequence spans 627 residues: uncharacterized protein (627 aa).

Basic and acidic residues predominate over residues 1–20 (MAKFKKDLTTKNKDTDRLSE). 2 disordered regions span residues 1 to 22 (MAKF…SEEI) and 578 to 606 (LSLG…LLPV). Positions 582–592 (SEEEQGQEETE) are enriched in acidic residues.

This is an uncharacterized protein from Rickettsia prowazekii (strain Madrid E).